Consider the following 184-residue polypeptide: ATP synthase subunit b, chloroplastic (184 aa).

The helical transmembrane segment at L27–L49 threads the bilayer.

Belongs to the ATPase B chain family. In terms of assembly, F-type ATPases have 2 components, F(1) - the catalytic core - and F(0) - the membrane proton channel. F(1) has five subunits: alpha(3), beta(3), gamma(1), delta(1), epsilon(1). F(0) has four main subunits: a(1), b(1), b'(1) and c(10-14). The alpha and beta chains form an alternating ring which encloses part of the gamma chain. F(1) is attached to F(0) by a central stalk formed by the gamma and epsilon chains, while a peripheral stalk is formed by the delta, b and b' chains.

Its subcellular location is the plastid. It localises to the chloroplast thylakoid membrane. Functionally, f(1)F(0) ATP synthase produces ATP from ADP in the presence of a proton or sodium gradient. F-type ATPases consist of two structural domains, F(1) containing the extramembraneous catalytic core and F(0) containing the membrane proton channel, linked together by a central stalk and a peripheral stalk. During catalysis, ATP synthesis in the catalytic domain of F(1) is coupled via a rotary mechanism of the central stalk subunits to proton translocation. Component of the F(0) channel, it forms part of the peripheral stalk, linking F(1) to F(0). The chain is ATP synthase subunit b, chloroplastic from Jasminum nudiflorum (Winter jasmine).